A 316-amino-acid polypeptide reads, in one-letter code: Formimidoylglutamase (316 aa).

Mn(2+) contacts are provided by His-127, Asp-156, His-158, Asp-160, Asp-247, and Asp-249.

The protein belongs to the arginase family. Requires Mn(2+) as cofactor.

The enzyme catalyses N-formimidoyl-L-glutamate + H2O = formamide + L-glutamate. It participates in amino-acid degradation; L-histidine degradation into L-glutamate; L-glutamate from N-formimidoyl-L-glutamate (hydrolase route): step 1/1. Functionally, catalyzes the conversion of N-formimidoyl-L-glutamate to L-glutamate and formamide. In Cupriavidus pinatubonensis (strain JMP 134 / LMG 1197) (Cupriavidus necator (strain JMP 134)), this protein is Formimidoylglutamase.